Reading from the N-terminus, the 476-residue chain is Cardiolipin synthase (476 aa).

2 helical membrane-spanning segments follow: residues 2-22 (HLLI…IIFI) and 31-51 (WAWI…YILF). 2 consecutive PLD phosphodiesterase domains span residues 207-234 (INYR…GDEY) and 389-416 (EKGF…DIRS). Active-site residues include histidine 212, lysine 214, aspartate 219, histidine 394, lysine 396, and aspartate 401.

It belongs to the phospholipase D family. Cardiolipin synthase subfamily.

It is found in the cell membrane. It carries out the reaction 2 a 1,2-diacyl-sn-glycero-3-phospho-(1'-sn-glycerol) = a cardiolipin + glycerol. In terms of biological role, catalyzes the reversible phosphatidyl group transfer from one phosphatidylglycerol molecule to another to form cardiolipin (CL) (diphosphatidylglycerol) and glycerol. In Clostridium perfringens (strain SM101 / Type A), this protein is Cardiolipin synthase (cls).